The sequence spans 147 residues: Protein phosphatase 1 regulatory subunit 14A (147 aa).

Residues 1–11 (MAAQRLGKRVL) are compositionally biased toward basic residues. The disordered stretch occupies residues 1 to 36 (MAAQRLGKRVLSKLQSPSRARGPGGSPSGLQKRHAR). Ser26 is modified (phosphoserine). The tract at residues 35 to 120 (ARVTVKYDRR…LLAKLRGLHK (86 aa)) is inhibitory. Position 38 is a phosphothreonine; by PKC (Thr38). The interval 118–147 (LHKQPGFPQPSPSDDPSLSPRQDRAHTAPP) is disordered. Phosphoserine occurs at positions 128, 134, and 136. Positions 138 to 147 (RQDRAHTAPP) are enriched in basic and acidic residues.

It belongs to the PP1 inhibitor family.

It is found in the cytoplasm. Functionally, inhibitor of PPP1CA. Has over 1000-fold higher inhibitory activity when phosphorylated, creating a molecular switch for regulating the phosphorylation status of PPP1CA substrates and smooth muscle contraction. This chain is Protein phosphatase 1 regulatory subunit 14A (Ppp1r14a), found in Mus musculus (Mouse).